A 238-amino-acid polypeptide reads, in one-letter code: 2-C-methyl-D-erythritol 4-phosphate cytidylyltransferase (238 aa).

This sequence belongs to the IspD/TarI cytidylyltransferase family. IspD subfamily.

It carries out the reaction 2-C-methyl-D-erythritol 4-phosphate + CTP + H(+) = 4-CDP-2-C-methyl-D-erythritol + diphosphate. It functions in the pathway isoprenoid biosynthesis; isopentenyl diphosphate biosynthesis via DXP pathway; isopentenyl diphosphate from 1-deoxy-D-xylulose 5-phosphate: step 2/6. Its function is as follows. Catalyzes the formation of 4-diphosphocytidyl-2-C-methyl-D-erythritol from CTP and 2-C-methyl-D-erythritol 4-phosphate (MEP). In Leptospira interrogans serogroup Icterohaemorrhagiae serovar copenhageni (strain Fiocruz L1-130), this protein is 2-C-methyl-D-erythritol 4-phosphate cytidylyltransferase.